Here is a 248-residue protein sequence, read N- to C-terminus: MLKKILLLALLPAIAFAEELPAPVKAIEKQGITIIKTFDAPGGMKGYLGKYQDMGVTIYLTPDGKHAISGYMYNEKGENLSNTLIEKEIYAPAGREMWQRMEQSHWLLDGKKDAPVIVYVFADPFCPYCKQFWQQARPWVDSGKVQLRTLLVGVIKPESPATAAAILASKDPAKTWQQYEASGGKLKLNVPANVSTEQMKVLSDNEKLMDDLGANVTPAIYYMSKENTLQQAVGLPDQKTLNIIMGNK.

The signal sequence occupies residues 1–17 (MLKKILLLALLPAIAFA). Cys-126 and Cys-129 are disulfide-bonded.

This sequence belongs to the thioredoxin family. DsbC subfamily. As to quaternary structure, homodimer. Interacts with ErfK, YbiS and YnhG.

Its subcellular location is the periplasm. Its function is as follows. Involved in disulfide bond formation. DsbG and DsbC are part of a periplasmic reducing system that controls the level of cysteine sulfenylation, and provides reducing equivalents to rescue oxidatively damaged secreted proteins such as ErfK, YbiS and YnhG. Probably also functions as a disulfide isomerase with a narrower substrate specificity than DsbC. DsbG is maintained in a reduced state by DsbD. Displays chaperone activity in both redox states in vitro. This is Thiol:disulfide interchange protein DsbG (dsbG) from Escherichia coli (strain K12).